The following is a 494-amino-acid chain: Alpha-amylase-related protein (494 aa).

A signal peptide spans 1 to 20; sequence MFKFASAVILCLVAASSTQA. A Pyrrolidone carboxylic acid modification is found at Q21. C48 and C104 are oxidised to a cystine. Residues N118, Q169, and D178 each coordinate Ca(2+). An intrachain disulfide couples C157 to C171. R206 provides a ligand contact to chloride. The active-site Nucleophile is D208. A Ca(2+)-binding site is contributed by H212. E245 acts as the Proton donor in catalysis. Chloride contacts are provided by N308 and R343. Disulfide bonds link C376–C382, C418–C441, and C448–C460.

Belongs to the glycosyl hydrolase 13 family. Monomer. Ca(2+) is required as a cofactor. Requires chloride as cofactor.

The protein localises to the secreted. It carries out the reaction Endohydrolysis of (1-&gt;4)-alpha-D-glucosidic linkages in polysaccharides containing three or more (1-&gt;4)-alpha-linked D-glucose units.. This Drosophila ercepeae (Fruit fly) protein is Alpha-amylase-related protein (Amyrel).